Reading from the N-terminus, the 462-residue chain is Cytochrome b558/566 subunit A (462 aa).

Topologically, residues 1-8 (MSLKIKSK) are cytoplasmic. Residues 9 to 26 (ITIGVLLIIFLLSIIFTL) traverse the membrane as a helical segment. Residues 27–431 (ENVSLAQTSP…TSTSPVTTIS (405 aa)) are Extracellular-facing. N-linked (GlcNAc...) asparagine glycosylation is found at N28, N65, N91, N121, N144, N164, N174, N183, N211, N278, N279, N293, N316, N339, N353, and N376. A helical membrane pass occupies residues 432-456 (SAIPPVTLYVTIIGVVVALVALVIL). Residues 457 to 462 (YVVFRR) are Cytoplasmic-facing.

The cofactor is heme. N-glycosylated on at least seven Asn residues by identical hexasaccharide units composed of Man, GlcNAc, Glc and 6-deoxy-6-sulfoglucose residues in the molar ration of 2:2:1:1. Post-translationally, O-glycosylated on probably as many as 35 positions by single Man residues.

The protein resides in the cell membrane. Monoheme cytochrome whose physiological function is not yet clear. This is Cytochrome b558/566 subunit A (cbsA) from Sulfolobus acidocaldarius (strain ATCC 33909 / DSM 639 / JCM 8929 / NBRC 15157 / NCIMB 11770).